The chain runs to 398 residues: Acetate kinase (398 aa).

Asparagine 7 serves as a coordination point for Mg(2+). Lysine 14 serves as a coordination point for ATP. Arginine 90 provides a ligand contact to substrate. Aspartate 147 serves as the catalytic Proton donor/acceptor. Residues 207–211 (HLGNG), 282–284 (DMR), and 330–334 (GIGEN) each bind ATP. Glutamate 383 provides a ligand contact to Mg(2+).

It belongs to the acetokinase family. In terms of assembly, homodimer. Mg(2+) is required as a cofactor. Mn(2+) serves as cofactor.

It localises to the cytoplasm. The enzyme catalyses acetate + ATP = acetyl phosphate + ADP. It functions in the pathway metabolic intermediate biosynthesis; acetyl-CoA biosynthesis; acetyl-CoA from acetate: step 1/2. In terms of biological role, catalyzes the formation of acetyl phosphate from acetate and ATP. Can also catalyze the reverse reaction. In Symbiobacterium thermophilum (strain DSM 24528 / JCM 14929 / IAM 14863 / T), this protein is Acetate kinase.